The following is a 198-amino-acid chain: Snake venom metalloproteinase neuwiedase (198 aa).

Positions 8–198 (RYIELVIVAD…QTFLTNHNPQ (191 aa)) constitute a Peptidase M12B domain. E11 and D95 together coordinate Ca(2+). H144 serves as a coordination point for Zn(2+). The active site involves E145. 2 residues coordinate Zn(2+): H148 and H154. Intrachain disulfides connect C159–C183 and C161–C166.

It belongs to the venom metalloproteinase (M12B) family. P-I subfamily. Zn(2+) is required as a cofactor. As to expression, expressed by the venom gland.

The protein resides in the secreted. With respect to regulation, inhibited by EDTA, EGTA and 1,10-phenanthroline, partially inhibited by beta-mercaptoethanol and not inhibited by serine protease inhibitors (leupeptin and aprotinin). Also inhibited by an excess of zinc, mercury and magnesium ions. Extracts of the plant Casearia mariquitensis neutralizes the decrease of platelets and plasma fibrinogen induced by the protease. The same extracts also partially inhibit Bbeta chain cleavage, but not Aalpha chain cleavage. This metalloprotease hydrolyzes the Aalpha chain of fibrin and fibrinogen first followed by the Bbeta chain and shows no effect on the gamma chain. It is also able to degrade type I collagen, fibronectin, laminin and induces inflammatory reaction. It is devoid of hemorrhagic and thrombotic activities, except in lung where it induces pulmonary bleeding. It also induces a mild myotoxic reaction. It is not able to inhibit platelet aggregation, but it induces decrease of platelets and plasma fibrinogen. It contributes to local tissue damage by inducing edema, inflammatory infiltrate and mild myotoxicity, and by degrading extracellular matrix components. The protein is Snake venom metalloproteinase neuwiedase of Bothrops pauloensis (Neuwied's lancehead).